The following is a 407-amino-acid chain: Imidazolonepropionase (407 aa).

Fe(3+)-binding residues include His68 and His70. His68 and His70 together coordinate Zn(2+). Positions 77, 140, and 173 each coordinate 4-imidazolone-5-propanoate. Tyr140 provides a ligand contact to N-formimidoyl-L-glutamate. His238 serves as a coordination point for Fe(3+). His238 contributes to the Zn(2+) binding site. Gln241 is a binding site for 4-imidazolone-5-propanoate. Asp313 is a Fe(3+) binding site. Asp313 contributes to the Zn(2+) binding site. N-formimidoyl-L-glutamate is bound by residues Asn315 and Gly317. Thr318 is a 4-imidazolone-5-propanoate binding site.

The protein belongs to the metallo-dependent hydrolases superfamily. HutI family. Zn(2+) is required as a cofactor. Requires Fe(3+) as cofactor.

The protein localises to the cytoplasm. It carries out the reaction 4-imidazolone-5-propanoate + H2O = N-formimidoyl-L-glutamate. It functions in the pathway amino-acid degradation; L-histidine degradation into L-glutamate; N-formimidoyl-L-glutamate from L-histidine: step 3/3. Its function is as follows. Catalyzes the hydrolytic cleavage of the carbon-nitrogen bond in imidazolone-5-propanoate to yield N-formimidoyl-L-glutamate. It is the third step in the universal histidine degradation pathway. This chain is Imidazolonepropionase, found in Burkholderia cenocepacia (strain HI2424).